The primary structure comprises 446 residues: N-succinylarginine dihydrolase (446 aa).

Residues Ala19 to Ser28, Asn110, and His137 to Arg138 each bind substrate. Glu174 is a catalytic residue. Substrate is bound at residue Arg213. His249 is a catalytic residue. Substrate-binding residues include Asp251 and Asn364. Cys370 functions as the Nucleophile in the catalytic mechanism.

It belongs to the succinylarginine dihydrolase family. Homodimer.

The catalysed reaction is N(2)-succinyl-L-arginine + 2 H2O + 2 H(+) = N(2)-succinyl-L-ornithine + 2 NH4(+) + CO2. The protein operates within amino-acid degradation; L-arginine degradation via AST pathway; L-glutamate and succinate from L-arginine: step 2/5. Its function is as follows. Catalyzes the hydrolysis of N(2)-succinylarginine into N(2)-succinylornithine, ammonia and CO(2). This is N-succinylarginine dihydrolase from Burkholderia ambifaria (strain MC40-6).